The following is a 1317-amino-acid chain: MNRTSPDSERPPGSEPVWERPWSVEEIRRSSQNWSLAADAGLLQFLQEFSQQTISRTHEIKKQVDGLIQETKATHCRLHNVFNDFLMLSNTQFIENRVYDEEVEEQALKAEAEKSEQEKTREQKEVDLIPKVREAVNYGLQVLDSAFEQLDIKAGNSDSEEEDANERVELILEPKDLYIDRPLPYLIGSKLFMEQEDVGLGELSSEEGSVGSDRGSIVDSEEEKEEEESDEDFASRSDNDQNQHTTRMSDEEEDDDGDLFADSEKEGDDIEDIEENTKSKRPTSFADELAARIKGDMSNQLKEEQIADGKPQKTMKEKKEKRTPPDDEEDILFPPPKLTDEDFSPFGSRGGLFSGQGLFDDEDESDLFRETSRDRPAQAPVSEESSSPKPGKKIPAGAVSVFLDTSAPSLKEFQKHEQPTPGKNPHLPTPAGLFDDNDDDDDNFFVPSCNKPPKTDKVKSTSIIFDDEEGDLFREKPAPLPVASVSQADENTTRADKTITLPSSKNPKLVSETKTQKGLFSDEEDSEDLFSSQNSSKSKSASLLSSQLPTSGSLFGDEDEEDNLFGSAPAKKQVSSQQPQSQEKPKPSEQPKKKASALLFSSDEEDQWNITDSHTKLATDRKSKGELWDSGTIQGQEVKAVKKTNLFEEDDDEADLFAIAKDSQKKTQRTSLLFEDDDDSGSSLFGFPPASVPPATMKKESISKVPSLFSDEEENEVPSRVKSVDVKVGNGKEADVAKVTEKEGLLTASDQEAAGPSDLFSSSPLDKGTKGRTKTVLSLFDEEEDKVEDQSNTHVSKNDAEKGLKTDGRPKSTGVFQDEELLFSHKLQKDNDPDVDLFAGTKKTRVSVPLDGSLFGDDEDYDLFSSAKTQPVVPEKKGALKKDRPVSLKNEEAPESTEGSKEKSLWKAETPQDSSGLTPFKSREPSSRIGKIQANLAINPAALLPTAALQIPGTKPALCELAFPSSEPGRSHGPESVPTLAGSEEAGVSFDLPAQADTLHSANKSRVKVRGKRRPQTRAARRLAAQESSESEDMSVSRGPVAQLASSPILPNGHQPHLQPRMASGEISSEKAMAPAAPPWESGPALSAVDRSFFVASLPQTGNEADLFDSGDIFPKSIGSQSMEGTKVKAAETPAHLSGGSKEKSLVFPALSEASSTDDLFQTVKPRPAKKRNPFPLLEDEDDLFADRKGKKNELKSDSHQDIISKTQDIFEDDIFATEAVKPFQKKREKERTLEPNLFDDNIDIFADLNVKPKEKSKKKVEAKSVFDDDTDDIFSSGLQAKKSKPKSQSAEATSELRSDHKVSNIFDDPLNAFGSQ.

The sufficient for interaction with WASHC3, WASHC4 and WASHC5; required for interaction with WASHC1 stretch occupies residues 1–219 (MNRTSPDSER…VGSDRGSIVD (219 aa)). Phosphoserine is present on residues Ser-157, Ser-159, Ser-204, Ser-205, and Ser-209. The segment covering 201–213 (GELSSEEGSVGSD) has biased composition (low complexity). Residues 201–630 (GELSSEEGSV…RKSKGELWDS (430 aa)) form a disordered region. Composition is skewed to acidic residues over residues 219-232 (DSEE…SDED) and 250-274 (DEEE…EDIE). Ser-284 carries the post-translational modification Phosphoserine. Composition is skewed to basic and acidic residues over residues 289-325 (LAAR…RTPP) and 366-376 (DLFRETSRDRP). Thr-323 bears the Phosphothreonine mark. Positions 348-582 (SRGGLFSGQG…QVSSQQPQSQ (235 aa)) are sufficient for interaction with CCDC93. Positions 349-1317 (RGGLFSGQGL…DDPLNAFGSQ (969 aa)) are interaction with VPS35. The LFa 1 signature appears at 358-368 (LFDDEDESDLF). The span at 379 to 399 (APVSEESSSPKPGKKIPAGAV) shows a compositional bias: low complexity. Phosphoserine is present on residues Ser-385 and Ser-387. Short sequence motifs (LFa) lie at residues 433–445 (LFDD…DNFF) and 464–473 (IFDDEEGDLF). The span at 500–518 (TLPSSKNPKLVSETKTQKG) shows a compositional bias: polar residues. Short sequence motifs (LFa) lie at residues 519–530 (LFSDEEDSEDLF) and 554–565 (LFGDEDEEDNLF). Residues Ser-521 and Ser-526 each carry the phosphoserine modification. Residues 529 to 548 (LFSSQNSSKSKSASLLSSQL) are compositionally biased toward low complexity. The segment covering 569–582 (PAKKQVSSQQPQSQ) has biased composition (low complexity). Residues 583-592 (EKPKPSEQPK) show a composition bias toward basic and acidic residues. An LFa 6 motif is present at residues 599 to 611 (LFSSDEEDQWNIT). Phosphoserine is present on residues Ser-601 and Ser-602. Positions 613 to 627 (SHTKLATDRKSKGEL) are enriched in basic and acidic residues. 2 consecutive short sequence motifs (LFa) follow at residues 646-657 (LFEEDDDEADLF) and 673-685 (LFED…SSLF). A disordered region spans residues 667–817 (TQRTSLLFED…GRPKSTGVFQ (151 aa)). Ser-710 carries the post-translational modification Phosphoserine. Residues 717-744 (VPSRVKSVDVKVGNGKEADVAKVTEKEG) are compositionally biased toward basic and acidic residues. Ser-763 and Ser-778 each carry phosphoserine. The span at 788-810 (EDQSNTHVSKNDAEKGLKTDGRP) shows a compositional bias: basic and acidic residues. 2 short sequence motifs (LFa) span residues 815 to 823 (VFQDEELLF) and 832 to 838 (DPDVDLF). Ser-853 is modified (phosphoserine). An LFa 11 motif is present at residues 854 to 864 (LFGDDEDYDLF). 2 disordered regions span residues 867–926 (AKTQ…REPS) and 960–1079 (ELAF…AAPP). Basic and acidic residues predominate over residues 874–906 (PEKKGALKKDRPVSLKNEEAPESTEGSKEKSLW). Positions 912–1317 (QDSSGLTPFK…DDPLNAFGSQ (406 aa)) are interaction with phospholipids. Basic residues predominate over residues 1003–1021 (NKSRVKVRGKRRPQTRAAR). Residues 1004–1022 (KSRVKVRGKRRPQTRAARR) are required for interaction with F-actin-capping protein subunit alpha (CAPZA1 or CAPZA2 or CAPZA3). Residues Ser-1029, Ser-1047, Ser-1064, and Ser-1092 each carry the phosphoserine modification. The LFa 12 signature appears at 1107–1114 (LFDSGDIF). A disordered region spans residues 1119–1141 (GSQSMEGTKVKAAETPAHLSGGS). Short sequence motifs (LFa) lie at residues 1147-1161 (VFPA…DDLF), 1177-1185 (LLEDEDDLF), 1210-1216 (IFEDDIF), 1238-1246 (LFDDNIDIF), 1266-1275 (VFDDDTDDIF), and 1306-1314 (IFDDPLNAF). 3 positions are modified to phosphoserine: Ser-1152, Ser-1155, and Ser-1156. The segment at 1158 to 1183 (DDLFQTVKPRPAKKRNPFPLLEDEDD) is disordered. The interval 1277-1317 (SGLQAKKSKPKSQSAEATSELRSDHKVSNIFDDPLNAFGSQ) is disordered. Ser-1316 carries the phosphoserine modification.

It belongs to the FAM21 family. As to quaternary structure, component of the WASH core complex also described as WASH regulatory complex SHRC composed of WASHC1, WASHC2, WASHC3, WASHC4 and WASHC5; in the complex interacts (via N-terminus) directly with WASHC1. The WASH core complex associates via WASHC2 with the F-actin-capping protein dimer (formed by CAPZA1, CAPZA2 or CAPZA3 and CAPZB) in a transient or substoichiometric manner which was initially described as WASH complex. Interacts with VPS35; mediates the association with the retromer CSC complex. Interacts with FKBP15. Interacts with CCDC93, CCDC22, C16orf62 homolog; indicative for an association of the WASH core complex with the CCC complex. Directly interacts with TBC1D23.

The protein localises to the early endosome membrane. Its subcellular location is the cell membrane. Acts as a component of the WASH core complex that functions as a nucleation-promoting factor (NPF) at the surface of endosomes, where it recruits and activates the Arp2/3 complex to induce actin polymerization, playing a key role in the fission of tubules that serve as transport intermediates during endosome sorting. Mediates the recruitment of the WASH core complex to endosome membranes via binding to phospholipids and VPS35 of the retromer CSC. Mediates the recruitment of the F-actin-capping protein dimer to the WASH core complex probably promoting localized F-actin polymerization needed for vesicle scission. Via its C-terminus binds various phospholipids, most strongly phosphatidylinositol 4-phosphate (PtdIns-(4)P), phosphatidylinositol 5-phosphate (PtdIns-(5)P) and phosphatidylinositol 3,5-bisphosphate (PtdIns-(3,5)P2). Involved in the endosome-to-plasma membrane trafficking and recycling of SNX27-retromer-dependent cargo proteins, such as GLUT1. Required for the association of DNAJC13, ENTR1, ANKRD50 with retromer CSC subunit VPS35. Required for the endosomal recruitment of CCC complex subunits COMMD1, CCDC93 and C16orf62 homolog. The polypeptide is WASH complex subunit 2 (Cricetulus griseus (Chinese hamster)).